Consider the following 469-residue polypeptide: 3-isopropylmalate dehydratase large subunit (469 aa).

Residues cysteine 347, cysteine 410, and cysteine 413 each coordinate [4Fe-4S] cluster.

This sequence belongs to the aconitase/IPM isomerase family. LeuC type 1 subfamily. Heterodimer of LeuC and LeuD. The cofactor is [4Fe-4S] cluster.

The catalysed reaction is (2R,3S)-3-isopropylmalate = (2S)-2-isopropylmalate. Its pathway is amino-acid biosynthesis; L-leucine biosynthesis; L-leucine from 3-methyl-2-oxobutanoate: step 2/4. Catalyzes the isomerization between 2-isopropylmalate and 3-isopropylmalate, via the formation of 2-isopropylmaleate. This chain is 3-isopropylmalate dehydratase large subunit, found in Burkholderia lata (strain ATCC 17760 / DSM 23089 / LMG 22485 / NCIMB 9086 / R18194 / 383).